A 44-amino-acid polypeptide reads, in one-letter code: Thymosin beta (44 aa).

Residues 1-44 (MSDKHDKPDISEVTKFDKSKLKKTETHEKNPLPTKETIDQEKQG) form a disordered region. Position 2 is an N-acetylserine (serine 2).

Expressed in regenerating axons.

It localises to the cytoplasm. Its subcellular location is the cytoskeleton. In terms of biological role, plays an important role in the organization of the cytoskeleton. Binds to and sequesters actin monomers (G actin) and therefore inhibits actin polymerization. May be involved in the regulation of structural plasticity in the CNS. The protein is Thymosin beta of Aplysia californica (California sea hare).